The chain runs to 310 residues: Metal ABC transporter substrate-binding lipoprotein ScbA (310 aa).

The signal sequence occupies residues 1 to 19; sequence MKKCRFLVLLLLAFVGLAA. The N-palmitoyl cysteine moiety is linked to residue Cys20. Cys20 carries the S-diacylglycerol cysteine lipid modification. 4 residues coordinate a divalent metal cation: His68, His140, Glu206, and Asp281.

Belongs to the bacterial solute-binding protein 9 family.

The protein resides in the cell membrane. Part of an ATP-binding cassette (ABC) transport system involved in metal import. Binds a metal with high affinity and specificity and delivers it to the membrane permease for translocation into the cytoplasm. Part of an ATP-driven transport system for manganese. Does not exhibit adhesion properties. The sequence is that of Metal ABC transporter substrate-binding lipoprotein ScbA (scbA) from Streptococcus cristatus.